The chain runs to 295 residues: ATP synthase gamma chain (295 aa).

This sequence belongs to the ATPase gamma chain family. F-type ATPases have 2 components, CF(1) - the catalytic core - and CF(0) - the membrane proton channel. CF(1) has five subunits: alpha(3), beta(3), gamma(1), delta(1), epsilon(1). CF(0) has three main subunits: a, b and c.

It is found in the cell inner membrane. Produces ATP from ADP in the presence of a proton gradient across the membrane. The gamma chain is believed to be important in regulating ATPase activity and the flow of protons through the CF(0) complex. This Campylobacter concisus (strain 13826) protein is ATP synthase gamma chain.